A 1333-amino-acid polypeptide reads, in one-letter code: Vascular endothelial growth factor receptor 1 (1333 aa).

The first 22 residues, methionine 1–glycine 22, serve as a signal peptide directing secretion. At tyrosine 23–glutamate 759 the chain is on the extracellular side. Ig-like C2-type domains are found at residues proline 32–serine 124, glycine 152–histidine 215, leucine 231–histidine 328, phenylalanine 334–proline 429, glutamine 430–lysine 550, proline 557–valine 656, and proline 662–threonine 748. 2 disulfides stabilise this stretch: cysteine 53/cysteine 108 and cysteine 159/cysteine 208. Residues asparagine 101, asparagine 165, asparagine 197, and asparagine 252 are each glycosylated (N-linked (GlcNAc...) asparagine). Cysteine 253 and cysteine 312 are oxidised to a cystine. Residues asparagine 324, asparagine 418, asparagine 475, asparagine 517, asparagine 598, asparagine 626, asparagine 667, and asparagine 714 are each glycosylated (N-linked (GlcNAc...) asparagine). 2 disulfide bridges follow: cysteine 455/cysteine 536 and cysteine 578/cysteine 637. A disulfide bridge links cysteine 683 with cysteine 732. The chain crosses the membrane as a helical span at residues leucine 760–isoleucine 781. At arginine 782–alanine 1333 the chain is on the cytoplasmic side. In terms of domain architecture, Protein kinase spans leucine 828–leucine 1158. Residues leucine 834–valine 842 and lysine 862 each bind ATP. The residue at position 915 (tyrosine 915) is a Phosphotyrosine; by autocatalysis. The interval glutamate 947–aspartate 983 is disordered. The segment covering serine 960–serine 970 has biased composition (low complexity). Catalysis depends on aspartate 1022, which acts as the Proton acceptor. Phosphotyrosine; by autocatalysis is present on residues tyrosine 1053, tyrosine 1169, tyrosine 1213, tyrosine 1242, tyrosine 1322, and tyrosine 1328.

It belongs to the protein kinase superfamily. Tyr protein kinase family. CSF-1/PDGF receptor subfamily. In terms of assembly, interacts with VEGFA, VEGFB and PGF. Monomer in the absence of bound VEGFA, VEGFB or PGF. Homodimer in the presence of bound VEGFA, VEGFB and PGF. Can also form a heterodimer with KDR. Interacts (tyrosine phosphorylated) with CBL, CRK, GRB2, NCK1, PIK3R1, PLCG, PSEN1 and PTPN11. Probably interacts with PTPRB. Interacts with RACK1. Identified in a complex with CBL and CD2AP. Post-translationally, N-glycosylated. Ubiquitinated after VEGFA-mediated autophosphorylation, leading to proteolytic degradation. In terms of processing, autophosphorylated on tyrosine residues upon ligand binding. Autophosphorylation occurs in trans, i.e. one subunit of the dimeric receptor phosphorylates tyrosine residues on the other subunit. Phosphorylation at Tyr-1169 is important for interaction with PLCG. Phosphorylation at Tyr-1213 is important for interaction with PIK3R1, PTPN11, GRB2, and PLCG. Phosphorylation at Tyr-1328 is important for endocytosis and for interaction with CBL, NCK1 and CRK. Is probably dephosphorylated by PTPRB.

It is found in the cell membrane. It localises to the endosome. The enzyme catalyses L-tyrosyl-[protein] + ATP = O-phospho-L-tyrosyl-[protein] + ADP + H(+). Its activity is regulated as follows. Present in an inactive conformation in the absence of bound ligand. Binding of VEGFA, VEGFB or PGF leads to dimerization and activation by autophosphorylation on tyrosine residues. Its function is as follows. Tyrosine-protein kinase that acts as a cell-surface receptor for VEGFA, VEGFB and PGF, and plays an essential role in the development of embryonic vasculature, the regulation of angiogenesis, cell survival, cell migration, macrophage function, chemotaxis, and cancer cell invasion. Acts as a positive regulator of postnatal retinal hyaloid vessel regression. May play an essential role as a negative regulator of embryonic angiogenesis by inhibiting excessive proliferation of endothelial cells. Can promote endothelial cell proliferation, survival and angiogenesis in adulthood. Its function in promoting cell proliferation seems to be cell-type specific. Promotes PGF-mediated proliferation of endothelial cells, and proliferation of some types of cancer cells, but does not promote proliferation of normal fibroblasts. Has very high affinity for VEGFA and relatively low protein kinase activity; may function as a negative regulator of VEGFA signaling by limiting the amount of free VEGFA and preventing its binding to KDR. Modulates KDR signaling by forming heterodimers with KDR. Ligand binding leads to the activation of several signaling cascades. Activation of PLCG leads to the production of the cellular signaling molecules diacylglycerol and inositol 1,4,5-trisphosphate and the activation of protein kinase C. Mediates phosphorylation of PIK3R1, the regulatory subunit of phosphatidylinositol 3-kinase, leading to the activation of phosphatidylinositol kinase and the downstream signaling pathway. Mediates activation of MAPK1/ERK2, MAPK3/ERK1 and the MAP kinase signaling pathway, as well as of the AKT1 signaling pathway. Phosphorylates SRC, YES1 and PLCG, and may also phosphorylate CBL. Promotes phosphorylation of AKT1 and PTK2/FAK1. The polypeptide is Vascular endothelial growth factor receptor 1 (Flt1) (Mus musculus (Mouse)).